A 313-amino-acid chain; its full sequence is Olfactory receptor 8B3 (313 aa).

The Extracellular portion of the chain corresponds to 1–25 (MLARNNSLVTEFILAGLTDHPEFQQ). Asn5 carries N-linked (GlcNAc...) asparagine glycosylation. The chain crosses the membrane as a helical span at residues 26–46 (PLFFLFLVVYIVTMVGNLGLI). Topologically, residues 47-54 (ILFGLNSH) are cytoplasmic. Residues 55–75 (LHTPMYYFLFNLSFIDLCYSS) form a helical membrane-spanning segment. The Extracellular portion of the chain corresponds to 76-99 (VFTPKMLMNFVSKKNIISYVGCMT). A disulfide bridge connects residues Cys97 and Cys189. A helical membrane pass occupies residues 100–120 (QLFFFLFFVISECYMLTSMAY). The Cytoplasmic portion of the chain corresponds to 121–139 (DRYVAICNPLLYKVTMSHQ). Residues 140-160 (VCSMLTFAAYIMGLAGATAHT) form a helical membrane-spanning segment. Over 161–197 (GCMLRLTFCSANIINHYLCDILPLLQLSCTSTYVNEV) the chain is Extracellular. Residues 198–217 (VVLIVVGINIMVPSCTILIS) traverse the membrane as a helical segment. Residues 218–237 (YVFIVTSILHIKSTQGRSKA) lie on the Cytoplasmic side of the membrane. A helical membrane pass occupies residues 238 to 258 (FSTCSSHVIALSLFFGSAAFM). Over 259–270 (YIKYSSGSMEQG) the chain is Extracellular. Residues 271 to 291 (KVSSVFYTNVVPMLNPLIYSL) form a helical membrane-spanning segment. At 292 to 313 (RNKDVKVALRKALIKIQRRNIF) the chain is on the cytoplasmic side.

The protein belongs to the G-protein coupled receptor 1 family.

Its subcellular location is the cell membrane. Functionally, odorant receptor. This chain is Olfactory receptor 8B3 (OR8B3), found in Homo sapiens (Human).